Reading from the N-terminus, the 677-residue chain is MKGEGKVFLKSRMKWIGLLGLVLSAFSLLVHFLLAGFTDDSISDYSIPVTIFSWRPIFDNPRFARHTPLYRRLWGPTRHVETLLPDANPRGFHSDPPARTNGFVFVRIQGGFHEIRNSIPDVVAVSRLLNATLVIPEIQSTTSSKGISSQFKSFAYLYNEEHFMATIANDVRVVKTLPKNLKWARRKKQIPSFKVSYGSSPYYYLHHVLPVLIKHSVVELVVPHGGCLQAILPSDLEEYQRLRCRVAFHGLQFRKEVQELSTKVLQRLRPLGRPFIAYDPGMTREALAYHGCAELFQDVHTELIQHKRAWMIKRGIVKGKLSVDSAEQRLAGLCPLMPEEVGILLRAYGYSWDTIIYVAGGEVFGGQRTLIPLHGMFENVVDRTSLSTSWELAKMYGREAKHNDIKKMTPPSIEVETKHDSLKSTRQRPQPLPPPPARPKYYNIEGWWGWVAESDNEPESTVIELRTNAHKLLWEAIDYVVSVEADVFISGFDRDGKGHPSFASLVMGHRLYQSASAKTFRPDRKQIAMLLEEIRDHMYEANHTWITSVRKLLKRSILEGLMESSKRSKAFSFLSHPVPECSCITRTHPVSNATNLGVTHRCPQWVDGAVSERLKEYKNAEKEEDLDEEDLSSSGLFFGHKESGGNNNGNNETVNSEANNKEEGQLEDQEELEGSER.

The chain crosses the membrane as a helical; Signal-anchor for type II membrane protein span at residues 15–35; it reads WIGLLGLVLSAFSLLVHFLLA. N130 is a glycosylation site (N-linked (GlcNAc...) asparagine). The interval 410–437 is disordered; that stretch reads PPSIEVETKHDSLKSTRQRPQPLPPPPA. Residues N542 and N592 are each glycosylated (N-linked (GlcNAc...) asparagine). Residues 619 to 677 form a disordered region; it reads NAEKEEDLDEEDLSSSGLFFGHKESGGNNNGNNETVNSEANNKEEGQLEDQEELEGSER. Residues 622-631 show a composition bias toward acidic residues; sequence KEEDLDEEDL. Low complexity predominate over residues 644-658; sequence GGNNNGNNETVNSEA. N651 is a glycosylation site (N-linked (GlcNAc...) asparagine). Acidic residues predominate over residues 665–677; it reads QLEDQEELEGSER.

This sequence belongs to the glycosyltransferase GT106 family.

It is found in the membrane. Its pathway is glycan metabolism. The protein is O-fucosyltransferase 27 of Arabidopsis thaliana (Mouse-ear cress).